We begin with the raw amino-acid sequence, 334 residues long: Cathepsin J (334 aa).

The signal sequence occupies residues 1 to 17; that stretch reads MTPTVLLLILCFGVASG. The propeptide at 18 to 113 is activation peptide; the sequence is AQAHDPKLDA…PHAQNHVSIG (96 aa). An N-linked (GlcNAc...) asparagine glycan is attached at Asn-72. 2 cysteine pairs are disulfide-bonded: Cys-135–Cys-178 and Cys-169–Cys-211. Cys-138 is an active-site residue. N-linked (GlcNAc...) asparagine glycans are attached at residues Asn-217, Asn-221, and Asn-268. Cys-269 and Cys-322 are joined by a disulfide. Active-site residues include His-276 and Asn-300.

It belongs to the peptidase C1 family. In terms of tissue distribution, expressed specifically in placenta.

It localises to the lysosome. This is Cathepsin J (Ctsj) from Mus musculus (Mouse).